The primary structure comprises 754 residues: Nibrin (754 aa).

Residues 24–83 (YVVGRKNCAILIEKDQSISRNHAVLTANFSVTNLSQTDEIPVLALKDNSKYGTFVNEEKM) enclose the FHA domain. BRCT domains are found at residues 105 to 181 (KFRI…TEFL) and 224 to 315 (GKTF…LAVI). The tract at residues 111 to 328 (EPLVACSSCL…TKNYCDPQGH (218 aa)) is mediates interaction with SP100. The tract at residues 221–402 (IFKGKTFIFL…FRMLSQDAPT (182 aa)) is interaction with MTOR, MAPKAP1 and RICTOR. At Ser278 the chain carries Phosphoserine; by ATM. A disordered region spans residues 326 to 346 (QGHPSTGLKTTTPGPSLSQGL). Polar residues predominate over residues 328–346 (HPSTGLKTTTPGPSLSQGL). Residue Thr337 is modified to Phosphothreonine. Ser343 carries the post-translational modification Phosphoserine; by ATM. Ser347 is subject to Phosphoserine. At Lys388 the chain carries N6-lactoyllysine. Disordered stretches follow at residues 396–415 (LSQD…NNNS) and 431–475 (LSPT…NQEM). Ser397 is subject to Phosphoserine. Thr402 carries the phosphothreonine modification. 2 stretches are compositionally biased toward polar residues: residues 431–440 (LSPTKLPSIN) and 447–462 (SQQQ…FQPS). Ser432 is modified (phosphoserine). Lys435 participates in a covalent cross-link: Glycyl lysine isopeptide (Lys-Gly) (interchain with G-Cter in ubiquitin). The Nuclear localization signal signature appears at 461–467 (PSTKKRE). A phosphoserine mark is found at Ser509 and Ser518. Glycyl lysine isopeptide (Lys-Gly) (interchain with G-Cter in SUMO2) cross-links involve residues Lys571 and Lys582. A phosphoserine mark is found at Ser615 and Ser673. Glycyl lysine isopeptide (Lys-Gly) (interchain with G-Cter in ubiquitin) cross-links involve residues Lys686, Lys690, and Lys735. Positions 740–749 (ADDLFRYNPY) match the FxF/Y motif motif.

This sequence belongs to the Nibrin family. As to quaternary structure, component of the MRN complex composed of two heterodimers RAD50 and MRE11 associated with a single NBN. The MRN complexes dimerize on DNA to form joined MRN-MRN oligomers required for DNA double-strand break repair. The MRN complexes dimerize on DNA to form joined MRN-MRN oligomers required for DNA double-strand break repair. As part of the MRN complex, interacts with MCM9; the interaction recruits the complex to DNA repair sites. Component of the BASC complex, at least composed of BRCA1, MSH2, MSH6, MLH1, ATM, BLM, RAD50, MRE11 and NBN. Interacts with histone H2AX; this requires phosphorylation of H2AX on 'Ser-139' and promotes NBN recruitment to DNA damage sites. Interacts with (phosphorylated) MDC1; promoting NBN recruitment to DNA damage sites. Interacts with (phosphorylated) RAD17; promoting NBN recruitment to DNA damage sites. Interacts (via FxF/Y motif) with ATM. Interacts with HJURP. Interacts with INTS3. Interacts with KPNA2. Interacts with TERF2; interaction is disrupted upon NBN phosphorylation by CDK2. Interacts with (phosphorylated) RBBP8/CtIP; the interaction links the role of the MRN complex in DNA double-strand break sensing to resection. Interacts with SP100; recruits NBN to PML bodies. Interacts with ATF2. Interacts with MTOR, MAPKAP1 isoform 2 and RICTOR; indicative for an association with the mTORC2 complex. Interacts with MRNIP. Interacts with UFL1; promoting UFL1 recruitment to double-strand breaks following DNA damage. Interacts with CYREN (via XLF motif). In terms of processing, phosphorylated by ATM in response of ionizing radiation, and such phosphorylation is responsible intra-S phase checkpoint control and telomere maintenance. Phosphorylated at Ser-432 by CDK2 in S/G2 phases abolishes interaction with TERF2, enabling DCLRE1B/Apollo recruitment to telomeres. Phosphorylation at Ser-432 in response to dysfunctional telomeres promotes non-homologous end joining repair at telomeres, while dephosphorylation by PPP1CA promotes microhomology-mediated end-joining (MMEJ) repair. Post-translationally, ubiquitinated at Lys-435 via 'Lys-6'-linked ubiquitin chains by RNF8, promoting NBN recruitment to DNA double-strand breaks (DSBs). Ubiquitinated at Lys-686 and Lys-689 via 'Lys-63'-linked ubiquitin chains by PELI1: ubiquitination takes place following PELI1 phosphorylation and promotes ATM activation and DNA repair. Ubiquitinated at Lys-735 via 'Lys-63'-linked ubiquitin chains by the SCF(SKP2) complex: ubiquitination takes place following SKP2 phosphorylation and promotes ATM activation and DNA repair. Lactylation at Lys-388 by KAT5 in response to DNA damage promotes recruitment of the MRN complex to DNA damage sites. Delactylated by HDAC3.

It is found in the nucleus. Its subcellular location is the chromosome. The protein resides in the PML body. It localises to the telomere. Component of the MRN complex, which plays a central role in double-strand break (DSB) repair, DNA recombination, maintenance of telomere integrity and meiosis. The MRN complex is involved in the repair of DNA double-strand breaks (DSBs) via homologous recombination (HR), an error-free mechanism which primarily occurs during S and G2 phases. The complex (1) mediates the end resection of damaged DNA, which generates proper single-stranded DNA, a key initial steps in HR, and is (2) required for the recruitment of other repair factors and efficient activation of ATM and ATR upon DNA damage. The MRN complex possesses single-strand endonuclease activity and double-strand-specific 3'-5' exonuclease activity, which are provided by MRE11, to initiate end resection, which is required for single-strand invasion and recombination. Within the MRN complex, NBN acts as a protein-protein adapter, which specifically recognizes and binds phosphorylated proteins, promoting their recruitment to DNA damage sites. Recruits MRE11 and RAD50 components of the MRN complex to DSBs in response to DNA damage. Promotes the recruitment of PI3/PI4-kinase family members ATM, ATR, and probably DNA-PKcs to the DNA damage sites, activating their functions. Mediates the recruitment of phosphorylated RBBP8/CtIP to DSBs, leading to cooperation between the MRN complex and RBBP8/CtIP to initiate end resection. RBBP8/CtIP specifically promotes the endonuclease activity of the MRN complex to clear DNA ends containing protein adducts. The MRN complex is also required for the processing of R-loops. NBN also functions in telomere length maintenance via its interaction with TERF2: interaction with TERF2 during G1 phase preventing recruitment of DCLRE1B/Apollo to telomeres. NBN also promotes DNA repair choice at dysfunctional telomeres: NBN phosphorylation by CK2 promotes non-homologous end joining repair at telomeres, while unphosphorylated NBN promotes microhomology-mediated end-joining (MMEJ) repair. Enhances AKT1 phosphorylation possibly by association with the mTORC2 complex. This chain is Nibrin (NBN), found in Pongo abelii (Sumatran orangutan).